Here is a 335-residue protein sequence, read N- to C-terminus: Pyridoxal 5'-phosphate synthase subunit PdxS (335 aa).

Residue Asp59 participates in D-ribose 5-phosphate binding. Lys116 serves as the catalytic Schiff-base intermediate with D-ribose 5-phosphate. Gly188 contacts D-ribose 5-phosphate. Residue Lys200 coordinates D-glyceraldehyde 3-phosphate. D-ribose 5-phosphate is bound by residues Gly253 and 274-275; that span reads GS.

Belongs to the PdxS/SNZ family. In the presence of PdxT, forms a dodecamer of heterodimers.

It carries out the reaction aldehydo-D-ribose 5-phosphate + D-glyceraldehyde 3-phosphate + L-glutamine = pyridoxal 5'-phosphate + L-glutamate + phosphate + 3 H2O + H(+). The protein operates within cofactor biosynthesis; pyridoxal 5'-phosphate biosynthesis. In terms of biological role, catalyzes the formation of pyridoxal 5'-phosphate from ribose 5-phosphate (RBP), glyceraldehyde 3-phosphate (G3P) and ammonia. The ammonia is provided by the PdxT subunit. Can also use ribulose 5-phosphate and dihydroxyacetone phosphate as substrates, resulting from enzyme-catalyzed isomerization of RBP and G3P, respectively. The polypeptide is Pyridoxal 5'-phosphate synthase subunit PdxS (Desulfurococcus amylolyticus (strain DSM 18924 / JCM 16383 / VKM B-2413 / 1221n) (Desulfurococcus kamchatkensis)).